Consider the following 132-residue polypeptide: Ubiquinol-cytochrome c reductase complex assembly factor 4 (132 aa).

Residues 1–15 (MNRVLCAPAAGAVRA) form the signal peptide. Over 16-78 (LRLIGRTSRS…GKGHQRPWWK (63 aa)) the chain is Mitochondrial matrix. The interval 24-73 (RSLHPLPGSRDRAHPAAEEQDDPDRPTEFSSSKANPRRWSVGHSMGKGHQ) is disordered. The span at 32–50 (SRDRAHPAAEEQDDPDRPT) shows a compositional bias: basic and acidic residues. Residues 79–95 (VLPLSCFLVALIIWCYL) traverse the membrane as a helical segment. At 96 to 132 (REESEADQWLRQVWGEVPEPSDRSEEPETPAAYRART) the chain is on the mitochondrial intermembrane side. The tract at residues 110–132 (GEVPEPSDRSEEPETPAAYRART) is disordered.

Belongs to the UQCC4 family. As to quaternary structure, forms a complex, named COMB/coordinator of mitochondrial CYTB biogenesis, composed of UQCC1, UQCC2, UQCC4, UQCC5 and UQCC6; stabilizes nascent cytochrome b/MT-CYB and promotes its membrane insertion. Forms a complex, named COMA, composed of UQCC1, UQCC2 and UQCC4; activates MT-CYB translation. Forms a complex, named COMC, composed of UQCC1, UQCC2; UQCC3 and UQCC4; mediates MT-CYB hemylation and association with the first nuclear-encoded complex III subunit UQCRQ. Complexes COMA and COMB are bound to the mitochondrion inner membrane by UQCC4.

Its subcellular location is the mitochondrion inner membrane. Functionally, required for the assembly and stability of the mitochondrial ubiquinol-cytochrome c reductase complex (complex III (CIII) or cytochrome b-c1 complex), a multisubunit transmembrane complex that is part of the mitochondrial electron transport chain (ETC) which drives oxidative phosphorylation. The protein is Ubiquinol-cytochrome c reductase complex assembly factor 4 (UQCC4) of Pongo abelii (Sumatran orangutan).